Reading from the N-terminus, the 451-residue chain is Nicotinamide phosphoribosyltransferase (451 aa).

A diphosphate-binding site is contributed by R209. D232 serves as a coordination point for beta-nicotinamide D-ribonucleotide. Positions 248 and 309 each coordinate diphosphate. Residues 309-311, 364-365, and R403 each bind beta-nicotinamide D-ribonucleotide; these read RPD and GD.

The protein belongs to the NAPRTase family.

The enzyme catalyses beta-nicotinamide D-ribonucleotide + diphosphate = 5-phospho-alpha-D-ribose 1-diphosphate + nicotinamide + H(+). The protein operates within cofactor biosynthesis; NAD(+) biosynthesis; nicotinamide D-ribonucleotide from 5-phospho-alpha-D-ribose 1-diphosphate and nicotinamide: step 1/1. Its function is as follows. Catalyzes the condensation of nicotinamide with 5-phosphoribosyl-1-pyrophosphate to yield nicotinamide mononucleotide, an intermediate in the biosynthesis of NAD. The chain is Nicotinamide phosphoribosyltransferase from Mycoplasma pneumoniae (strain ATCC 29342 / M129 / Subtype 1) (Mycoplasmoides pneumoniae).